An 813-amino-acid chain; its full sequence is Homeobox-leucine zipper protein ROC4 (813 aa).

The interval 62–112 is disordered; the sequence is EVENEMSRSGSDHLDVVSCGDAGGGGGDDDDDEDAEHGNPPKRKKRYHRHT. Residues 101 to 112 show a composition bias toward basic residues; sequence PPKRKKRYHRHT. The segment at residues 104-163 is a DNA-binding region (homeobox); the sequence is RKKRYHRHTPQQIQELEAMFKECPHPDEKQRAELSKRLGLEPRQVKFWFQNRRTQMKMQL. The stretch at 152 to 191 forms a coiled coil; that stretch reads FQNRRTQMKMQLERHENSLLKQENDKLRSENLSIREATSN. One can recognise an START domain in the interval 306-559; the sequence is AGIDKSLFLE…LQRQCECLAL (254 aa).

The protein belongs to the HD-ZIP homeobox family. Class IV subfamily.

The protein resides in the nucleus. In terms of biological role, probable transcription factor. The polypeptide is Homeobox-leucine zipper protein ROC4 (ROC4) (Oryza sativa subsp. japonica (Rice)).